A 1074-amino-acid polypeptide reads, in one-letter code: Transmembrane protein 132E (1074 aa).

The first 25 residues, 1-25 (MAPGMSGRGGAALLCLSALLAHASG), serve as a signal peptide directing secretion. Over 26–893 (RSHPASPSPP…LTDLEIGMYA (868 aa)) the chain is Extracellular. N-linked (GlcNAc...) asparagine glycosylation is found at Asn-70 and Asn-91. 2 disordered regions span residues 202-226 (PPAPAAPPTARRKSPDGLEPEATGE) and 241-264 (ASGGCGGSRRGAGPGVGARAESPT). Positions 243–256 (GGCGGSRRGAGPGV) are enriched in gly residues. N-linked (GlcNAc...) asparagine glycosylation is found at Asn-318 and Asn-399. Disordered regions lie at residues 563–585 (RSVRESEDEDEEEEERRQSASRG) and 814–867 (GRDE…VPPT). Over residues 841–862 (GAGPPGSALPAPEAPGPGTASP) the composition is skewed to low complexity. Residues 894-914 (LLGVFCLAILVFLINCIVFVL) traverse the membrane as a helical segment. Over 915 to 1074 (RYRHKRIPPE…NYMRRIKEIA (160 aa)) the chain is Cytoplasmic. The disordered stretch occupies residues 946-1063 (VQGELSPPAG…PTRPTAPPDL (118 aa)). Residues 972-984 (SGSSQTSVQSQVH) are compositionally biased toward low complexity. The segment covering 1034–1044 (GEEDEEEEEDL) has biased composition (acidic residues).

Belongs to the TMEM132 family.

It is found in the membrane. Functionally, required for normal inner ear hair cell function and hearing. This Homo sapiens (Human) protein is Transmembrane protein 132E.